A 276-amino-acid chain; its full sequence is Small ribosomal subunit protein uS2 (276 aa).

The tract at residues 255–276 (ASATATAAPTEAGAPEPTTDPS) is disordered.

This sequence belongs to the universal ribosomal protein uS2 family.

The sequence is that of Small ribosomal subunit protein uS2 from Mycolicibacterium paratuberculosis (strain ATCC BAA-968 / K-10) (Mycobacterium paratuberculosis).